A 107-amino-acid chain; its full sequence is IQ domain-containing protein F6 (107 aa).

The IQ domain maps to 42–71; sequence QEWAVVKVQAQVRMWQARRRFLQARQAACI.

The sequence is that of IQ domain-containing protein F6 (IQCF6) from Homo sapiens (Human).